Consider the following 93-residue polypeptide: Aspartyl/glutamyl-tRNA(Asn/Gln) amidotransferase subunit C (93 aa).

Belongs to the GatC family. Heterotrimer of A, B and C subunits.

It catalyses the reaction L-glutamyl-tRNA(Gln) + L-glutamine + ATP + H2O = L-glutaminyl-tRNA(Gln) + L-glutamate + ADP + phosphate + H(+). The enzyme catalyses L-aspartyl-tRNA(Asn) + L-glutamine + ATP + H2O = L-asparaginyl-tRNA(Asn) + L-glutamate + ADP + phosphate + 2 H(+). Allows the formation of correctly charged Asn-tRNA(Asn) or Gln-tRNA(Gln) through the transamidation of misacylated Asp-tRNA(Asn) or Glu-tRNA(Gln) in organisms which lack either or both of asparaginyl-tRNA or glutaminyl-tRNA synthetases. The reaction takes place in the presence of glutamine and ATP through an activated phospho-Asp-tRNA(Asn) or phospho-Glu-tRNA(Gln). The sequence is that of Aspartyl/glutamyl-tRNA(Asn/Gln) amidotransferase subunit C from Methanocella arvoryzae (strain DSM 22066 / NBRC 105507 / MRE50).